The primary structure comprises 382 residues: Kelch domain-containing protein 3 (382 aa).

Kelch repeat units follow at residues 25–77 (RVYS…PYMR), 88–138 (TVFL…VLGK), 139–189 (IMYI…TMLG), 191–249 (HMYV…GYNG), and 251–301 (LYIF…IVGD).

Component of a CRL2(KLHDC3) complex, also named ECS(KLHDC3) complex, composed of CUL2, Elongin BC (ELOB and ELOC), RBX1 and substrate-specific adapter KLHDC3. May form oligomers as a KLHDC3-ELOB-ELOC complex; this interaction is likely autoinhibitory for the E3 ligase complex. As to expression, expressed specifically in testis, particularly in pachytene spermatocytes.

The protein localises to the cytoplasm. The protein operates within protein modification; protein ubiquitination. Its function is as follows. Substrate-recognition component of a Cul2-RING (CRL2) E3 ubiquitin-protein ligase complex of the DesCEND (destruction via C-end degrons) pathway, which recognizes a C-degron located at the extreme C terminus of target proteins, leading to their ubiquitination and degradation. The C-degron recognized by the DesCEND pathway is usually a motif of less than ten residues and can be present in full-length proteins, truncated proteins or proteolytically cleaved forms. The CRL2(KLHDC3) complex specifically recognizes proteins with a glycine (Gly) at the C-terminus, leading to their ubiquitination and degradation: recognizes the C-terminal -Arg-(Xaa)n-Arg-Gly, -Arg-(Xaa)n-Lys-Gly, and -Arg-(Xaa)n-Gln-Gly degrons. The CRL2(KLHDC3) complex mediates ubiquitination and degradation of truncated SELENOV and SEPHS2 selenoproteins produced by failed UGA/Sec decoding, which end with a glycine. May be involved in meiotic recombination process. The polypeptide is Kelch domain-containing protein 3 (Mus musculus (Mouse)).